Here is a 158-residue protein sequence, read N- to C-terminus: Glycine/sarcosine/betaine reductase complex component A (158 aa).

Sec-44 is an active-site residue. Residue Sec-44 is a non-standard amino acid, selenocysteine.

The protein belongs to the GrdA family. As to quaternary structure, monomer. Component of the glycine, sarcosine and betaine reductase complexes, together with components B and C.

The catalysed reaction is acetyl phosphate + [thioredoxin]-disulfide + NH4(+) + H2O = [thioredoxin]-dithiol + glycine + phosphate + H(+). The enzyme catalyses acetyl phosphate + methylamine + [thioredoxin]-disulfide + H2O = sarcosine + [thioredoxin]-dithiol + phosphate + H(+). It carries out the reaction acetyl phosphate + trimethylamine + [thioredoxin]-disulfide + H2O = glycine betaine + [thioredoxin]-dithiol + phosphate + H(+). Its function is as follows. In the first step of glycine, betaine and sarcosine reductases, the substrate is bound to component PB via a Schiff base intermediate. Then the PB-activated substrate is nucleophilically attacked by the selenol anion of component PA to transform it to a carboxymethylated selenoether and the respective amine. By action of component PC, acetyl phosphate is formed, leaving component PA in its oxidized state. Finally component PA becomes reduced by the thioredoxin system to start a new catalytic cycle of reductive deamination. In Clostridium botulinum (strain ATCC 19397 / Type A), this protein is Glycine/sarcosine/betaine reductase complex component A.